The sequence spans 103 residues: Thioredoxin-1 (103 aa).

The Thioredoxin domain occupies 2–103 (VKQVSDSSEF…KLEASIKANL (102 aa)). Catalysis depends on nucleophile residues Cys-30 and Cys-33. Residues Cys-30 and Cys-33 are joined by a disulfide bond.

This sequence belongs to the thioredoxin family.

Functionally, participates in various redox reactions through the reversible oxidation of its active center dithiol to a disulfide and catalyzes dithiol-disulfide exchange reactions. The chain is Thioredoxin-1 (trx1) from Schizosaccharomyces pombe (strain 972 / ATCC 24843) (Fission yeast).